We begin with the raw amino-acid sequence, 500 residues long: Glycerol kinase (500 aa).

An ADP-binding site is contributed by Thr15. ATP contacts are provided by Thr15, Thr16, and Ser17. Residue Thr15 participates in sn-glycerol 3-phosphate binding. Residue Arg19 participates in ADP binding. Arg85, Glu86, Tyr137, and Asp245 together coordinate sn-glycerol 3-phosphate. Glycerol contacts are provided by Arg85, Glu86, Tyr137, Asp245, and Gln246. ADP is bound by residues Thr267 and Gly310. Residues Thr267, Gly310, Gln314, and Gly411 each coordinate ATP. Residues Gly411 and Asn415 each coordinate ADP.

Belongs to the FGGY kinase family.

The enzyme catalyses glycerol + ATP = sn-glycerol 3-phosphate + ADP + H(+). The protein operates within polyol metabolism; glycerol degradation via glycerol kinase pathway; sn-glycerol 3-phosphate from glycerol: step 1/1. Inhibited by fructose 1,6-bisphosphate (FBP). Its function is as follows. Key enzyme in the regulation of glycerol uptake and metabolism. Catalyzes the phosphorylation of glycerol to yield sn-glycerol 3-phosphate. This is Glycerol kinase from Aeromonas salmonicida (strain A449).